Consider the following 308-residue polypeptide: MITFLSITFSILVGVIFVIGNFANGFIALVNSIEWVKRQKISFADQILTGLAVSRVGLLWVLLLHLYATEFNLAFYSVEVRITAYNVWIVTNHFSNWLSTSLSMFYLLKIATFSNLIFLHLKRKVKSVILVTLLGPLLFLVCHLFVMNMNHIVWRKEYEGNITWRIKLRSAMYLSNVTVTMLANLIPLTLTLMSFLLLICSLCKHLKKMQVHGKGSQDPSTKVHIKALQTVTSFLLLCAIYFLSMILSVWNFELEKKPVFMFCQAVIFSYPSTHPLILIWGNKKLKQIFLSVLWNVRYWVKGQKPSSP.

Methionine 1 is a topological domain (extracellular). Residues 2–22 traverse the membrane as a helical segment; the sequence is ITFLSITFSILVGVIFVIGNF. At 23–46 the chain is on the cytoplasmic side; it reads ANGFIALVNSIEWVKRQKISFADQ. A helical transmembrane segment spans residues 47–67; that stretch reads ILTGLAVSRVGLLWVLLLHLY. Residues 68–86 are Extracellular-facing; it reads ATEFNLAFYSVEVRITAYN. The chain crosses the membrane as a helical span at residues 87-107; sequence VWIVTNHFSNWLSTSLSMFYL. The Cytoplasmic portion of the chain corresponds to 108 to 126; the sequence is LKIATFSNLIFLHLKRKVK. Residues 127–147 traverse the membrane as a helical segment; it reads SVILVTLLGPLLFLVCHLFVM. The Extracellular portion of the chain corresponds to 148–178; it reads NMNHIVWRKEYEGNITWRIKLRSAMYLSNVT. Asparagine 161 and asparagine 176 each carry an N-linked (GlcNAc...) asparagine glycan. A helical membrane pass occupies residues 179–199; the sequence is VTMLANLIPLTLTLMSFLLLI. At 200–229 the chain is on the cytoplasmic side; the sequence is CSLCKHLKKMQVHGKGSQDPSTKVHIKALQ. A helical membrane pass occupies residues 230–250; the sequence is TVTSFLLLCAIYFLSMILSVW. Residues 251 to 258 are Extracellular-facing; it reads NFELEKKP. The chain crosses the membrane as a helical span at residues 259–279; it reads VFMFCQAVIFSYPSTHPLILI. Residues 280–308 lie on the Cytoplasmic side of the membrane; that stretch reads WGNKKLKQIFLSVLWNVRYWVKGQKPSSP.

The protein belongs to the G-protein coupled receptor T2R family.

Its subcellular location is the membrane. The protein resides in the cell projection. The protein localises to the cilium membrane. Its function is as follows. Receptor that may play a role in the perception of bitterness and is gustducin-linked. May play a role in sensing the chemical composition of the gastrointestinal content. The activity of this receptor may stimulate alpha gustducin, mediate PLC-beta-2 activation and lead to the gating of TRPM5. In airway epithelial cells, binding of bitter compounds increases the intracellular calcium ion concentration and stimulates ciliary beat frequency. The protein is Taste receptor type 2 member 46 (TAS2R46) of Macaca mulatta (Rhesus macaque).